Consider the following 704-residue polypeptide: Elongation factor G 1 (704 aa).

One can recognise a tr-type G domain in the interval 8–291; that stretch reads ERYRNIGISA…AVIDYLPSPA (284 aa). GTP-binding positions include 17–24, 88–92, and 142–145; these read AHIDAGKT, DTPGH, and NKMD.

This sequence belongs to the TRAFAC class translation factor GTPase superfamily. Classic translation factor GTPase family. EF-G/EF-2 subfamily.

The protein localises to the cytoplasm. Its function is as follows. Catalyzes the GTP-dependent ribosomal translocation step during translation elongation. During this step, the ribosome changes from the pre-translocational (PRE) to the post-translocational (POST) state as the newly formed A-site-bound peptidyl-tRNA and P-site-bound deacylated tRNA move to the P and E sites, respectively. Catalyzes the coordinated movement of the two tRNA molecules, the mRNA and conformational changes in the ribosome. The polypeptide is Elongation factor G 1 (Burkholderia pseudomallei (strain 1710b)).